The primary structure comprises 419 residues: Capsule polysaccharide modification protein LipB (419 aa).

The protein resides in the cell inner membrane. In terms of biological role, involved in the phospholipid modification of the capsular polysaccharide, a strong requirement for its translocation to the cell surface. The chain is Capsule polysaccharide modification protein LipB (lipB) from Neisseria meningitidis serogroup B (strain ATCC BAA-335 / MC58).